A 730-amino-acid polypeptide reads, in one-letter code: uncharacterized protein (730 aa).

Residues 615-625 (FDKENSFDPSD) show a composition bias toward basic and acidic residues. 2 disordered regions span residues 615–667 (FDKE…SSFS) and 684–730 (KSGS…FGKI). Composition is skewed to low complexity over residues 653-667 (SSSS…SSFS) and 684-701 (KSGS…NSSS). Positions 713-723 (KKKKKKKKKKS) are enriched in basic residues.

This is an uncharacterized protein from Saccharomyces cerevisiae (strain ATCC 204508 / S288c) (Baker's yeast).